The chain runs to 89 residues: MANHKSAEKRARQTIKRTERNRFYRTRLKNITKAVRVAVEAKDLNAANEALKVANKSIHSFVSRGFLKKQTAARRVSRLAQLVNTLKAA.

A disordered region spans residues Met1–Arg20.

The protein belongs to the bacterial ribosomal protein bS20 family.

In terms of biological role, binds directly to 16S ribosomal RNA. The protein is Small ribosomal subunit protein bS20 of Campylobacter concisus (strain 13826).